A 445-amino-acid polypeptide reads, in one-letter code: Exodeoxyribonuclease 7 large subunit (445 aa).

It belongs to the XseA family. Heterooligomer composed of large and small subunits.

Its subcellular location is the cytoplasm. It carries out the reaction Exonucleolytic cleavage in either 5'- to 3'- or 3'- to 5'-direction to yield nucleoside 5'-phosphates.. In terms of biological role, bidirectionally degrades single-stranded DNA into large acid-insoluble oligonucleotides, which are then degraded further into small acid-soluble oligonucleotides. In Nautilia profundicola (strain ATCC BAA-1463 / DSM 18972 / AmH), this protein is Exodeoxyribonuclease 7 large subunit.